The sequence spans 375 residues: 23S rRNA (uracil(747)-C(5))-methyltransferase RlmC (375 aa).

Residues cysteine 3, cysteine 11, cysteine 14, and cysteine 87 each contribute to the [4Fe-4S] cluster site. Residues glutamine 212, phenylalanine 241, glutamate 262, and asparagine 307 each coordinate S-adenosyl-L-methionine. Cysteine 334 functions as the Nucleophile in the catalytic mechanism.

It belongs to the class I-like SAM-binding methyltransferase superfamily. RNA M5U methyltransferase family. RlmC subfamily.

The enzyme catalyses uridine(747) in 23S rRNA + S-adenosyl-L-methionine = 5-methyluridine(747) in 23S rRNA + S-adenosyl-L-homocysteine + H(+). Catalyzes the formation of 5-methyl-uridine at position 747 (m5U747) in 23S rRNA. The protein is 23S rRNA (uracil(747)-C(5))-methyltransferase RlmC of Xenorhabdus nematophila (strain ATCC 19061 / DSM 3370 / CCUG 14189 / LMG 1036 / NCIMB 9965 / AN6).